We begin with the raw amino-acid sequence, 270 residues long: Formamidopyrimidine-DNA glycosylase (270 aa).

The active-site Schiff-base intermediate with DNA is the Pro-2. The active-site Proton donor is Glu-3. The Proton donor; for beta-elimination activity role is filled by Lys-58. DNA-binding residues include His-91, Arg-110, and Arg-151. An FPG-type zinc finger spans residues 236–270 (FVYGRGGQPCKVCGTELREVKLGQRASVYCPRCQR). The active-site Proton donor; for delta-elimination activity is Arg-260.

Belongs to the FPG family. In terms of assembly, monomer. Requires Zn(2+) as cofactor.

The enzyme catalyses Hydrolysis of DNA containing ring-opened 7-methylguanine residues, releasing 2,6-diamino-4-hydroxy-5-(N-methyl)formamidopyrimidine.. It carries out the reaction 2'-deoxyribonucleotide-(2'-deoxyribose 5'-phosphate)-2'-deoxyribonucleotide-DNA = a 3'-end 2'-deoxyribonucleotide-(2,3-dehydro-2,3-deoxyribose 5'-phosphate)-DNA + a 5'-end 5'-phospho-2'-deoxyribonucleoside-DNA + H(+). Its function is as follows. Involved in base excision repair of DNA damaged by oxidation or by mutagenic agents. Acts as a DNA glycosylase that recognizes and removes damaged bases. Has a preference for oxidized purines, such as 7,8-dihydro-8-oxoguanine (8-oxoG). Has AP (apurinic/apyrimidinic) lyase activity and introduces nicks in the DNA strand. Cleaves the DNA backbone by beta-delta elimination to generate a single-strand break at the site of the removed base with both 3'- and 5'-phosphates. The sequence is that of Formamidopyrimidine-DNA glycosylase from Pseudomonas putida (strain ATCC 700007 / DSM 6899 / JCM 31910 / BCRC 17059 / LMG 24140 / F1).